Reading from the N-terminus, the 1835-residue chain is Protein TIC 214 (1835 aa).

6 helical membrane passes run 25 to 45 (VGLY…LFLL), 64 to 84 (FITG…HLAL), 87 to 107 (PHTI…WNNH), 124 to 144 (LSIQ…HFIL), 172 to 192 (VGWL…LFWI), and 221 to 241 (IFSI…PSPI). Positions 246-258 (LKETSETEERGES) are enriched in basic and acidic residues. Disordered regions lie at residues 246–304 (LKET…DGNQ), 735–759 (EFKT…KKEE), and 1535–1578 (NRNQ…KRQS). A compositionally biased stretch (acidic residues) spans 259 to 268 (AEETDVEIET). Over residues 1553–1569 (PRNRQKDLEKDYAESDI) the composition is skewed to basic and acidic residues.

The protein belongs to the TIC214 family. In terms of assembly, part of the Tic complex.

It is found in the plastid. The protein localises to the chloroplast inner membrane. Involved in protein precursor import into chloroplasts. May be part of an intermediate translocation complex acting as a protein-conducting channel at the inner envelope. The polypeptide is Protein TIC 214 (Liriodendron tulipifera (Tuliptree)).